We begin with the raw amino-acid sequence, 353 residues long: Photosystem II D2 protein (353 aa).

N-acetylthreonine is present on threonine 2. A Phosphothreonine modification is found at threonine 2. A helical transmembrane segment spans residues 41 to 61 (CAYFALGGWFTGTTFVTSWYT). Histidine 118 is a binding site for chlorophyll a. The chain crosses the membrane as a helical span at residues 125-141 (GFMLRQFELARSVQLRP). Pheophytin a-binding residues include glutamine 130 and asparagine 143. Residues 153 to 166 (VFVSVFLIYPLGQS) form a helical membrane-spanning segment. Position 198 (histidine 198) interacts with chlorophyll a. The helical transmembrane segment at 208-228 (AALLCAIHGATVENTLFEDGD) threads the bilayer. 2 residues coordinate a plastoquinone: histidine 215 and phenylalanine 262. Histidine 215 provides a ligand contact to Fe cation. A Fe cation-binding site is contributed by histidine 269. The helical transmembrane segment at 279–295 (GLWMSAIGVVGLALNLR) threads the bilayer.

Belongs to the reaction center PufL/M/PsbA/D family. PSII is composed of 1 copy each of membrane proteins PsbA, PsbB, PsbC, PsbD, PsbE, PsbF, PsbH, PsbI, PsbJ, PsbK, PsbL, PsbM, PsbT, PsbX, PsbY, PsbZ, Psb30/Ycf12, at least 3 peripheral proteins of the oxygen-evolving complex and a large number of cofactors. It forms dimeric complexes. The cofactor is The D1/D2 heterodimer binds P680, chlorophylls that are the primary electron donor of PSII, and subsequent electron acceptors. It shares a non-heme iron and each subunit binds pheophytin, quinone, additional chlorophylls, carotenoids and lipids. There is also a Cl(-1) ion associated with D1 and D2, which is required for oxygen evolution. The PSII complex binds additional chlorophylls, carotenoids and specific lipids..

The protein localises to the plastid. Its subcellular location is the chloroplast thylakoid membrane. It catalyses the reaction 2 a plastoquinone + 4 hnu + 2 H2O = 2 a plastoquinol + O2. Photosystem II (PSII) is a light-driven water:plastoquinone oxidoreductase that uses light energy to abstract electrons from H(2)O, generating O(2) and a proton gradient subsequently used for ATP formation. It consists of a core antenna complex that captures photons, and an electron transfer chain that converts photonic excitation into a charge separation. The D1/D2 (PsbA/PsbD) reaction center heterodimer binds P680, the primary electron donor of PSII as well as several subsequent electron acceptors. D2 is needed for assembly of a stable PSII complex. The sequence is that of Photosystem II D2 protein from Oryza nivara (Indian wild rice).